We begin with the raw amino-acid sequence, 188 residues long: dCTP deaminase (188 aa).

DCTP-binding positions include 111-116, 135-137, glutamine 156, tyrosine 170, and glutamine 180; these read KSTYAR and TLE. Glutamate 137 functions as the Proton donor/acceptor in the catalytic mechanism.

Belongs to the dCTP deaminase family. As to quaternary structure, homotrimer.

It catalyses the reaction dCTP + H2O + H(+) = dUTP + NH4(+). Its pathway is pyrimidine metabolism; dUMP biosynthesis; dUMP from dCTP (dUTP route): step 1/2. In terms of biological role, catalyzes the deamination of dCTP to dUTP. In Pseudomonas putida (strain GB-1), this protein is dCTP deaminase.